Reading from the N-terminus, the 345-residue chain is Type II restriction enzyme HgiCI (345 aa).

It catalyses the reaction Endonucleolytic cleavage of DNA to give specific double-stranded fragments with terminal 5'-phosphates.. Functionally, a P subtype restriction enzyme that recognizes the double-stranded sequence 5'-GGYRCC-3' and cleaves after G-1. The protein is Type II restriction enzyme HgiCI (hgiCIR) of Herpetosiphon aurantiacus (Herpetosiphon giganteus).